Consider the following 101-residue polypeptide: Trp operon repressor homolog (101 aa).

The DNA-binding element occupies 59-82; the sequence is QREIAQKYGVSIAQITRGSNALKA.

It belongs to the TrpR family. As to quaternary structure, homodimer.

It localises to the cytoplasm. Functionally, this protein is an aporepressor. When complexed with L-tryptophan it binds the operator region of the trp operon and prevents the initiation of transcription. The polypeptide is Trp operon repressor homolog (Chlamydia caviae (strain ATCC VR-813 / DSM 19441 / 03DC25 / GPIC) (Chlamydophila caviae)).